A 374-amino-acid polypeptide reads, in one-letter code: Ribosomal RNA large subunit methyltransferase M (374 aa).

Residues Ser-188, 221–224 (CPGG), Asp-240, Asp-260, and Asp-276 each bind S-adenosyl-L-methionine. The active-site Proton acceptor is the Lys-305.

The protein belongs to the class I-like SAM-binding methyltransferase superfamily. RNA methyltransferase RlmE family. RlmM subfamily. Monomer.

The protein localises to the cytoplasm. The catalysed reaction is cytidine(2498) in 23S rRNA + S-adenosyl-L-methionine = 2'-O-methylcytidine(2498) in 23S rRNA + S-adenosyl-L-homocysteine + H(+). Its function is as follows. Catalyzes the 2'-O-methylation at nucleotide C2498 in 23S rRNA. The sequence is that of Ribosomal RNA large subunit methyltransferase M from Edwardsiella ictaluri (strain 93-146).